We begin with the raw amino-acid sequence, 346 residues long: Nitrilase 3 (346 aa).

N-acetylserine is present on Ser2. The CN hydrolase domain occupies 25–297 (VRVTIVQSST…EGLVTADLDL (273 aa)). Residue Glu65 is the Proton acceptor of the active site. The active-site Proton donor is the Lys152. The active-site Nucleophile is the Cys186.

It belongs to the carbon-nitrogen hydrolase superfamily. Nitrilase family.

It is found in the cell membrane. The enzyme catalyses a nitrile + 2 H2O = a carboxylate + NH4(+). Functionally, can convert indole-3-acetonitrile to the plant hormone indole-3-acetic acid. This is Nitrilase 3 (NIT3) from Arabidopsis thaliana (Mouse-ear cress).